A 328-amino-acid polypeptide reads, in one-letter code: Peroxisomal adenine nucleotide transporter 1 (328 aa).

6 helical membrane-spanning segments follow: residues 1–21 (MLTLESALTGAVASAMANIAV), 78–98 (TVTTVATFVQNFVYFFWYTFI), 128–148 (LVLGVAAASISQLFTSPMAVV), 185–202 (LRTGLALTINPSITYASF), 226–246 (FILGVLSKMISTLVTQPLIVA), and 277–297 (WKGVLPQLTKGVIVQGLLFAF). Solcar repeat units follow at residues 1–101 (MLTL…IRKS), 122–208 (PSTI…LKEV), and 220–304 (LSAV…LTKS).

Belongs to the mitochondrial carrier (TC 2.A.29) family.

Its subcellular location is the peroxisome membrane. Its function is as follows. Adenine nucleotide transporter involved in the uniport of ATP and adenine nucleotide hetero-exchange transport between the cytosol and the peroxisomal lumen. This transport is accompanied by a proton transport from the peroxisomal lumen to the cytosol. Transport of ATP into the peroxisome is required for beta-oxidation of medium-chain fatty acids. Required for growth on medium-chain fatty acids, pH gradient formation in peroxisomes and for normal peroxisome proliferation. The polypeptide is Peroxisomal adenine nucleotide transporter 1 (ANT1) (Saccharomyces cerevisiae (strain ATCC 204508 / S288c) (Baker's yeast)).